The primary structure comprises 632 residues: Putative ferric transport system permease protein FbpB 1 (632 aa).

15 consecutive transmembrane segments (helical) span residues 5–25, 37–57, 58–78, 93–113, 144–164, 178–198, 223–243, 270–290, 299–319, 330–350, 377–397, 436–456, 469–489, 490–510, and 547–567; these read SFNLTWAWFLPVIVYGALPLL, LFLTALSVLFMFISATVYKIS, MGYSVIVLLVGYTALATLSLA, LLCIILLIFFFIVYPTLAIFV, LFLSGFVGIVSTVFGLAFALY, IFSILPIVTPPFVVGLGVTLM, GFNGIAIAQILAFAPISFMIL, YQIIFPLLRPALANSFLIVFI, PLVLGGSFDVIATQIYFYIAG, LGSMLLIFSLAIFIIQYIWIG, IIGMLGFWVIFNMALYGSIFY, IYAGIAAPLTAFFGLLIAYIV, FLTMLCFAVPGTVAGVSYILA, FNNAPLYITGTGIIVIISMVM, and CFIVLPLLKPALLSALVTSFV. An ABC transmembrane type-1 1 domain is found at 140–345; the sequence is ITNSLFLSGF…IFSLAIFIIQ (206 aa). Positions 431–632 constitute an ABC transmembrane type-1 2 domain; it reads LINTLIYAGI…DCRRYAYFPF (202 aa).

This sequence belongs to the binding-protein-dependent transport system permease family. FbpB subfamily. In terms of assembly, the complex is composed of two ATP-binding proteins (FbpC), two transmembrane proteins (FbpB) and a solute-binding protein (FbpA).

The protein localises to the cell inner membrane. Its function is as follows. Part of the ABC transporter complex FbpABC (TC 3.A.1.10.1) involved in Fe(3+) ions import. Probably responsible for the translocation of the substrate across the membrane. The protein is Putative ferric transport system permease protein FbpB 1 (fbpB1) of Haemophilus influenzae (strain ATCC 51907 / DSM 11121 / KW20 / Rd).